A 2193-amino-acid polypeptide reads, in one-letter code: MGSQVSTQRSGSHENSNSATEGSTINYTTINYYKDSYAATAGKQSLKQDPDKFANPVKDIFTEMAAPLKSPSAEACGYSDRVAQLTIGNSTITTQEAANIIVGYGEWPSYCSDDDATAVDKPTRPDVSVNRFYTLDTKLWEKSSKGWYWKFPDVLTETGVFGQNAQFHYLYRSGFCIHVQCNASKFHQGALLVAILPEYVIGTVAGGTGTEDSHPPYKQTQPGADGFELQHPYVLDAGIPISQLTVCPHQWINLRTNNCATIIVPYMNTLPFDSALNHCNFGLLVVPISPLDFDQGATPVIPITITLAPMCSEFGGLRQAVTQGFPTELKPGTNQFLTTDDGVSAPILPNFHPTPCIHIPGEVRNLLELCQVETILEVNNVPTNATSLMERLRFPVSAQAGKGELCAVFRADPGRDGPWQSTMLGQLCGYYTQWSGSLEVTFMFTGSFMATGKMLIAYTPPGGPLPKDRATAMLGTHVIWDFGLQSSVTLVIPWISNTHYRAHARDGVFDYYTTGLVSIWYQTNYVVPIGAPNTAYILALAAAQKNFTMKLCKDTSHILQTASIQGDRVADVIESSIGDSVSRALTQALPAPTGQNTQVSSHRLDTGEVPALQAAEIGASSNTSDESMIETRCVLNSHSTAETTLDSFFSRAGLVGEIDLPLEGTTNPNGYANWDIDITGYAQMRRKVELFTYMRFDAEFTFVACTPTGEVVPQLLQYMFVPPGAPKPESRESLAWQTATNPSVFVKLTDPPAQVSVPFMSPASAYQWFYDGYPTFGEHKQEKDLEYGACPNNMMGTFSVRTVGSSKSKYPLVVRIYMRMKHVRAWIPRPMRNQNYLFKANPNYAGNSIKPTGTSRNAITTLGKFGQQSGAIYVGNFRVVNRHLATHNDWANLVWEDSSRDLLVSSTTAQGCDTIARCNCQTGVYYCNSKRKHYPVSFSKPSLIYVEASEYYPARYQSHLMLAAGHSESGDCGGILRCQHGVVGIASTGGNGLVGFADVRDLLWLDEEAMEQGVSDYIKGLGDAFGTGFTDAVSREVEALRNHLIGSDGAVEKILKNLIKLISALVIVIRSDYDMVTLTATLALIGCHGSPWAWIKAKTASILGIPIAQKQSASWLKKFNDMASAAKGLEWISNKISKFIDWLREKIVPAAKEKAEFLTNLKQFPLLENQITHLEQSAASQEDLEAMFGNVSYLAHFCRKFQPLYATEAKRVYVLEKRMNNYMQFKSTHRIEPVCLIIRGSPGTGKSLATGIIARAIADKYHSSVYSLPPDPDHFDGYKQQVVTVMDDLCQNPDGKDMSLFYQMVSTVDIIPPMASLEEKGVSFTSKFVIASTNASNIIVPTVSDSDAIRRRFYMDCDIEVTDSSKTDLGRLDAGRAAKLCSENNTANFKRCSPLVCGKAIQLRDRKSKVRYSVDTVVSELIREYNSRSAIGNTIEALFQGPPKFRPIRISLEEKPAPDAISDLLASVDSEEVRQYCREQGWIIPETPTNVERHLNRAVLVMQSIATVVAVVSLVYVIYKLFAGFQGAYSGAPNQVLKKPVLRTATVQGPSLDFALSLLRRNIRQVQTDQGHFTMLGVRDRLAVLPRHSQPGKTIWVEHKLVNILDAAELVDEQGVNLELTLVTLDTNEKFRDITKFIPETISGASDATLVINTEHMPSMFVPVGDVVQYGFLNLSGKPTHRTMMYNFPTKAGQCGGVVTSVGKIIGIHIGGNGRQGFCAGLKRSYFASEQGEIQWVKSNKETGRLNINGPTRTKLEPSVFHDVFEANKEPAVLTSKDPRLEVDFEQALFSKYVGNVLHEPDEYVHQAALHYANQLKQLDINTKKMSMEEACYGTDNLEAIDLHTSAGYPYSALGIKKRDILDPATRDVSKMKSYMDKYGLDLPYSTYVKDELRSLDKIKKGKSRLIEASSLNDSVYLRMTFGHLYEVFHANPGTVTGSAVGCNPDVFWSKLPILLPGSLFAFDYSGYDASLSPVWFRALEVVLREIGYSEEAVSLIEGINHTHHIYRNKTYCVLGGMPSGCSGTSIFNSMINNIIIRTLLIKTFKGIDLDELNMVAYGDDVLASYPFPIDCLELAKTGKEYGLTMTPAGKSPCFNEVTWENATFLKRGFLPDHQFPFLIHPTMPMKEIHESIRWTKDARNTQDHVRSLCLLAWHNGKDEYEKFVSTIRSVPVGKALAIPNFENLRRNWLELF.

The segment at 1-22 (MGSQVSTQRSGSHENSNSATEG) is disordered. A lipid anchor (N-myristoyl glycine; by host) is attached at Gly-2. Residues 2–1503 (GSQVSTQRSG…HLNRAVLVMQ (1502 aa)) are Cytoplasmic-facing. The segment at 568–588 (RVADVIESSIGDSVSRALTQA) is amphipathic alpha-helix. Residues His-883 and Asp-901 each act as for protease 2A activity in the active site. Zn(2+)-binding residues include Cys-918 and Cys-920. The active-site For protease 2A activity is the Cys-972. Zn(2+)-binding residues include Cys-978 and His-980. In terms of domain architecture, SF3 helicase spans 1216–1374 (EKRMNNYMQF…SKTDLGRLDA (159 aa)). 1240–1247 (GSPGTGKS) lines the ATP pocket. Positions 1381, 1392, and 1397 each coordinate Zn(2+). The C4-type; degenerate zinc finger occupies 1381–1397 (CSENNTANFKRCSPLVC). An intramembrane segment occupies 1504–1519 (SIATVVAVVSLVYVIY). Over 1520 to 2193 (KLFAGFQGAY…NLRRNWLELF (674 aa)) the chain is Cytoplasmic. O-(5'-phospho-RNA)-tyrosine is present on Tyr-1529. Residues 1549–1727 (GPSLDFALSL…FCAGLKRSYF (179 aa)) form the Peptidase C3 domain. Active-site for protease 3C activity residues include His-1588, Glu-1619, and Cys-1695. One can recognise a RdRp catalytic domain in the interval 1958 to 2073 (GSLFAFDYSG…ASYPFPIDCL (116 aa)). Residues Asp-1964 and Asp-2060 each coordinate Mg(2+).

It belongs to the picornaviruses polyprotein family. Interacts with capsid protein VP1 and capsid protein VP3 to form heterotrimeric protomers. As to quaternary structure, interacts with capsid protein VP0, and capsid protein VP3 to form heterotrimeric protomers. Five protomers subsequently associate to form pentamers which serve as building blocks for the capsid. Interacts with capsid protein VP2, capsid protein VP3 and capsid protein VP4 following cleavage of capsid protein VP0. Interacts with host SCARB2. Interacts with host ARF6; this interaction mediates viral endocytosis. In terms of assembly, interacts with capsid protein VP1 and capsid protein VP3 in the mature capsid. Interacts with host SCARB2. Interacts with capsid protein VP0 and capsid protein VP1 to form heterotrimeric protomers. Five protomers subsequently associate to form pentamers which serve as building blocks for the capsid. Interacts with capsid protein VP4 in the mature capsid. Interacts with protein 2C; this interaction may be important for virion morphogenesis. As to quaternary structure, interacts with capsid protein VP1 and capsid protein VP3. In terms of assembly, homodimer. Interacts with host BAX; this interaction activates the mitochondrial apoptotic pathway. Interacts with host ILF2. As to quaternary structure, homohexamer; forms a hexameric ring structure with 6-fold symmetry characteristic of AAA+ ATPases. Interacts (via N-terminus) with host RTN3 (via reticulon domain); this interaction is important for viral replication. Interacts with capsid protein VP3; this interaction may be important for virion morphogenesis. In terms of assembly, interacts with protein 3CD. Homodimer. Interacts with host GBF1. Interacts (via GOLD domain) with host ACBD3 (via GOLD domain); this interaction allows the formation of a viral protein 3A/ACBD3 heterotetramer with a 2:2 stoichiometry, which will stimulate the recruitment of host PI4KB in order to synthesize PI4P at the viral RNA replication sites. As to quaternary structure, interacts with RNA-directed RNA polymerase. In terms of assembly, interacts with host IFIH1/MDA5; this interaction inhibits host IFIH1. Interacts with protein 3AB and with RNA-directed RNA polymerase. As to quaternary structure, interacts with Viral protein genome-linked and with protein 3CD. The cofactor is Mg(2+). In terms of processing, specific enzymatic cleavages in vivo by the viral proteases yield processing intermediates and the mature proteins. Myristoylation is required for the formation of pentamers during virus assembly. Further assembly of 12 pentamers and a molecule of genomic RNA generates the provirion. Post-translationally, during virion maturation, immature virions are rendered infectious following cleavage of VP0 into VP4 and VP2. This maturation seems to be an autocatalytic event triggered by the presence of RNA in the capsid and it is followed by a conformational change infectious virion. In terms of processing, myristoylation is required during RNA encapsidation and formation of the mature virus particle. VPg is uridylylated by the polymerase into VPg-pUpU. This acts as a nucleotide-peptide primer for the genomic RNA replication.

Its subcellular location is the virion. The protein resides in the host cytoplasm. It localises to the host cytoplasmic vesicle membrane. The protein localises to the host nucleus. The catalysed reaction is a ribonucleoside 5'-triphosphate + H2O = a ribonucleoside 5'-diphosphate + phosphate + H(+). It carries out the reaction Selective cleavage of Tyr-|-Gly bond in the picornavirus polyprotein.. The enzyme catalyses RNA(n) + a ribonucleoside 5'-triphosphate = RNA(n+1) + diphosphate. It catalyses the reaction Selective cleavage of Gln-|-Gly bond in the poliovirus polyprotein. In other picornavirus reactions Glu may be substituted for Gln, and Ser or Thr for Gly.. With respect to regulation, replication or transcription is subject to high level of random mutations by the nucleotide analog ribavirin. In terms of biological role, forms an icosahedral capsid of pseudo T=3 symmetry with capsid proteins VP2 and VP3. The capsid is 300 Angstroms in diameter, composed of 60 copies of each capsid protein and enclosing the viral positive strand RNA genome. Capsid protein VP1 mainly forms the vertices of the capsid. Capsid protein VP1, together with VP2, interacts with host cell receptor SCARB2 to provide virion attachment to target host cells. This attachment induces virion internalization. After binding to its receptor, the capsid undergoes conformational changes. Capsid protein VP1 N-terminus (that contains an amphipathic alpha-helix) and capsid protein VP4 are externalized. Together, they shape a pore in the host membrane through which viral genome is translocated to host cell cytoplasm. Its function is as follows. Forms an icosahedral capsid of pseudo T=3 symmetry with capsid proteins VP2 and VP3. The capsid is 300 Angstroms in diameter, composed of 60 copies of each capsid protein and enclosing the viral positive strand RNA genome. Capsid protein VP2, together with VP1, interacts with host cell receptor SCARB2 to provide virion attachment to target host cells. Functionally, forms an icosahedral capsid of pseudo T=3 symmetry with capsid proteins VP2 and VP3. The capsid is 300 Angstroms in diameter, composed of 60 copies of each capsid protein and enclosing the viral positive strand RNA genome. Lies on the inner surface of the capsid shell. After binding to the host receptor, the capsid undergoes conformational changes. Capsid protein VP4 is released, Capsid protein VP1 N-terminus is externalized, and together, they shape a pore in the host membrane through which the viral genome is translocated into the host cell cytoplasm. In terms of biological role, component of immature procapsids, which is cleaved into capsid proteins VP4 and VP2 after maturation. Allows the capsid to remain inactive before the maturation step. Its function is as follows. Cysteine protease that cleaves viral polyprotein and specific host proteins. It is responsible for the autocatalytic cleavage between the P1 and P2 regions, which is the first cleavage occurring in the polyprotein. Also cleaves the host translation initiation factor EIF4G1, in order to shut down the capped cellular mRNA translation. Inhibits the host nucleus-cytoplasm protein and RNA trafficking by cleaving host members of the nuclear pores. Counteracts stress granule formation probably by antagonizing its assembly or promoting its dissassembly. Cleaves and inhibits host IFIH1/MDA5, thereby inhibiting the type-I IFN production and the establishment of the antiviral state. Cleaves and inhibits host MAVS, thereby inhibiting the type-I IFN production and the establishment of the antiviral state. Functionally, plays an essential role in the virus replication cycle by acting as a viroporin. Creates a pore in the host endoplasmic reticulum and as a consequence releases Ca2+ in the cytoplasm of infected cell. In turn, high levels of cytoplasmic calcium may trigger membrane trafficking and transport of viral ER-associated proteins to viroplasms, sites of viral genome replication. Induces and associates with structural rearrangements of intracellular membranes. Displays RNA-binding, nucleotide binding and NTPase activities. May play a role in virion morphogenesis and viral RNA encapsidation by interacting with the capsid protein VP3. In terms of biological role, localizes the viral replication complex to the surface of membranous vesicles. Together with protein 3CD binds the Cis-Active RNA Element (CRE) which is involved in RNA synthesis initiation. Acts as a cofactor to stimulate the activity of 3D polymerase, maybe through a nucleid acid chaperone activity. Its function is as follows. Localizes the viral replication complex to the surface of membranous vesicles. It inhibits host cell endoplasmic reticulum-to-Golgi apparatus transport and causes the disassembly of the Golgi complex, possibly through GBF1 interaction. This would result in depletion of MHC, trail receptors and IFN receptors at the host cell surface. Plays an essential role in viral RNA replication by recruiting ACBD3 and PI4KB at the viral replication sites, thereby allowing the formation of the rearranged membranous structures where viral replication takes place. Functionally, acts as a primer for viral RNA replication and remains covalently bound to viral genomic RNA. VPg is uridylylated prior to priming replication into VPg-pUpU. The oriI viral genomic sequence may act as a template for this. The VPg-pUpU is then used as primer on the genomic RNA poly(A) by the RNA-dependent RNA polymerase to replicate the viral genome. During genome replication, the VPg-RNA linkage is removed by the host TDP2, thereby accelerating replication. During the late stage of the replication cycle, host TDP2 is excluded from sites of viral RNA synthesis and encapsidation, allowing for the generation of progeny virions. Involved in the viral replication complex and viral polypeptide maturation. It exhibits protease activity with a specificity and catalytic efficiency that is different from protease 3C. Protein 3CD lacks polymerase activity. Protein 3CD binds to the 5'UTR of the viral genome. In terms of biological role, major viral protease that mediates proteolytic processing of the polyprotein. Cleaves host EIF5B, contributing to host translation shutoff. Also cleaves host PABPC1, contributing to host translation shutoff. Disassembles host cytoplasmic stress granules by cleaving host G3BP1, although this effect is less prononced than the inhibition induced by protease 2A. Cleaves host RIGI and thus contributes to the inhibition of type I interferon production. Cleaves host IRF7 and thus contributes to the inhibition of type I interferon production. Cleaves host HNRNPA1 thereby increasing the translation of apoptosis protease activating factor APAF1, leading to apoptosis of the host cell. Cleaves host NLRP1, triggers host N-glycine-mediated degradation of the autoinhibitory NLRP1 N-terminal fragment. Its function is as follows. Replicates the viral genomic RNA on the surface of intracellular membranes. May form linear arrays of subunits that propagate along a strong head-to-tail interaction called interface-I. Covalently attaches UMP to a tyrosine of VPg, which is used to prime RNA synthesis. The positive stranded RNA genome is first replicated at virus induced membranous vesicles, creating a dsRNA genomic replication form. This dsRNA is then used as template to synthesize positive stranded RNA genomes. ss(+)RNA genomes are either translated, replicated or encapsidated. This is Genome polyprotein from Human enterovirus 71 (strain 7423/MS/87) (EV71).